Reading from the N-terminus, the 1606-residue chain is Pentafunctional AROM polypeptide (1606 aa).

The 3-dehydroquinate synthase stretch occupies residues 1–390 (MANADVLKVS…YEPKATVVPD (390 aa)). Residues 45-47 (DTN), 85-88 (ETSK), 116-118 (GGV), and aspartate 121 contribute to the NAD(+) site. A 7-phospho-2-dehydro-3-deoxy-D-arabino-heptonate-binding site is contributed by arginine 132. Residue 141-142 (TT) participates in NAD(+) binding. 2 residues coordinate 7-phospho-2-dehydro-3-deoxy-D-arabino-heptonate: aspartate 148 and lysine 154. Position 163 (lysine 163) interacts with NAD(+). Asparagine 164 contacts 7-phospho-2-dehydro-3-deoxy-D-arabino-heptonate. NAD(+) contacts are provided by residues 181 to 184 (FLET) and asparagine 192. Glutamate 196 contributes to the Zn(2+) binding site. Residues 196–199 (EVVK) and lysine 256 each bind 7-phospho-2-dehydro-3-deoxy-D-arabino-heptonate. Catalysis depends on glutamate 266, which acts as the Proton acceptor; for 3-dehydroquinate synthase activity. 7-phospho-2-dehydro-3-deoxy-D-arabino-heptonate-binding positions include 270-274 (RNLVN) and histidine 277. Histidine 277 serves as a coordination point for Zn(2+). Residue histidine 281 is the Proton acceptor; for 3-dehydroquinate synthase activity of the active site. 7-phospho-2-dehydro-3-deoxy-D-arabino-heptonate contacts are provided by histidine 293 and lysine 362. Histidine 293 serves as a coordination point for Zn(2+). Residues 403-850 (VIPGVPRHHP…WDDLENKIGL (448 aa)) form an EPSP synthase region. Residue cysteine 832 is the For EPSP synthase activity of the active site. Positions 875–1070 (AASIILIGMR…TSGRRSYFLC (196 aa)) are shikimate kinase. Residue 882–889 (GMRGTGKT) coordinates ATP. Positions 1071-1296 (LTYPDVTQSF…AAPGQLSFKQ (226 aa)) are 3-dehydroquinase. Residue histidine 1198 is the Proton acceptor; for 3-dehydroquinate dehydratase activity of the active site. Catalysis depends on lysine 1226, which acts as the Schiff-base intermediate with substrate; for 3-dehydroquinate dehydratase activity. The interval 1309–1606 (AQRFYLFGTP…QFVFEEECES (298 aa)) is shikimate dehydrogenase.

This sequence in the N-terminal section; belongs to the sugar phosphate cyclases superfamily. Dehydroquinate synthase family. The protein in the 2nd section; belongs to the EPSP synthase family. In the 3rd section; belongs to the shikimate kinase family. It in the 4th section; belongs to the type-I 3-dehydroquinase family. This sequence in the C-terminal section; belongs to the shikimate dehydrogenase family. As to quaternary structure, homodimer. The cofactor is Zn(2+).

It is found in the cytoplasm. The catalysed reaction is 7-phospho-2-dehydro-3-deoxy-D-arabino-heptonate = 3-dehydroquinate + phosphate. It carries out the reaction 3-dehydroquinate = 3-dehydroshikimate + H2O. The enzyme catalyses shikimate + NADP(+) = 3-dehydroshikimate + NADPH + H(+). It catalyses the reaction shikimate + ATP = 3-phosphoshikimate + ADP + H(+). The catalysed reaction is 3-phosphoshikimate + phosphoenolpyruvate = 5-O-(1-carboxyvinyl)-3-phosphoshikimate + phosphate. Its pathway is metabolic intermediate biosynthesis; chorismate biosynthesis; chorismate from D-erythrose 4-phosphate and phosphoenolpyruvate: step 2/7. It functions in the pathway metabolic intermediate biosynthesis; chorismate biosynthesis; chorismate from D-erythrose 4-phosphate and phosphoenolpyruvate: step 3/7. It participates in metabolic intermediate biosynthesis; chorismate biosynthesis; chorismate from D-erythrose 4-phosphate and phosphoenolpyruvate: step 4/7. The protein operates within metabolic intermediate biosynthesis; chorismate biosynthesis; chorismate from D-erythrose 4-phosphate and phosphoenolpyruvate: step 5/7. Its pathway is metabolic intermediate biosynthesis; chorismate biosynthesis; chorismate from D-erythrose 4-phosphate and phosphoenolpyruvate: step 6/7. Functionally, the AROM polypeptide catalyzes 5 consecutive enzymatic reactions in prechorismate polyaromatic amino acid biosynthesis. In Laccaria bicolor (strain S238N-H82 / ATCC MYA-4686) (Bicoloured deceiver), this protein is Pentafunctional AROM polypeptide.